The primary structure comprises 130 residues: Small ribosomal subunit protein uS11c (130 aa).

It belongs to the universal ribosomal protein uS11 family. In terms of assembly, part of the 30S ribosomal subunit.

The protein localises to the plastid. Its subcellular location is the chloroplast. The protein is Small ribosomal subunit protein uS11c of Trieres chinensis (Marine centric diatom).